We begin with the raw amino-acid sequence, 432 residues long: Enolase (432 aa).

Gln167 provides a ligand contact to (2R)-2-phosphoglycerate. Catalysis depends on Glu209, which acts as the Proton donor. Mg(2+)-binding residues include Asp246, Glu289, and Asp316. 4 residues coordinate (2R)-2-phosphoglycerate: Lys341, Arg370, Ser371, and Lys392. Lys341 (proton acceptor) is an active-site residue.

This sequence belongs to the enolase family. Mg(2+) serves as cofactor.

It is found in the cytoplasm. It localises to the secreted. The protein resides in the cell surface. It carries out the reaction (2R)-2-phosphoglycerate = phosphoenolpyruvate + H2O. Its pathway is carbohydrate degradation; glycolysis; pyruvate from D-glyceraldehyde 3-phosphate: step 4/5. Catalyzes the reversible conversion of 2-phosphoglycerate (2-PG) into phosphoenolpyruvate (PEP). It is essential for the degradation of carbohydrates via glycolysis. In Thermotoga neapolitana (strain ATCC 49049 / DSM 4359 / NBRC 107923 / NS-E), this protein is Enolase.